The sequence spans 494 residues: Leucine-rich repeat extensin-like protein 4 (494 aa).

A signal peptide spans 1–25; sequence MKNNTTQSLLLLLLFFFFFFEISHS. N-linked (GlcNAc...) asparagine glycosylation is found at Asn-60, Asn-94, and Asn-106. LRR repeat units follow at residues 121–145, 146–168, 169–193, 194–217, 219–240, 242–263, 264–287, 289–311, and 312–335; these read IRTV…LGLL, TDLA…KFKQ, LKLL…VLHL, PSLK…LFSK, LDAI…FGDS, VSVI…LVEM, KNLN…IGRL, NVTV…VGGM, and VEVE…ICQL. The N-linked (GlcNAc...) asparagine glycan is linked to Asn-289. Residue Asn-340 is glycosylated (N-linked (GlcNAc...) asparagine). Positions 404–494 are contains the Ser-Pro(4) repeats; sequence SPPIVALPPP…YASPPPPPFY (91 aa). The span at 422–479 shows a compositional bias: pro residues; sequence PPVYSPPPSPPVFSPPPSPPVYSPPPPPSIHYSSPPPPPVHHSSPPPPSPEFEGPLPP. Residues 422-482 are disordered; it reads PPVYSPPPSP…FEGPLPPVIG (61 aa).

In terms of processing, hydroxylated on proline residues in the S-P-P-P-P repeat. Post-translationally, O-glycosylated on hydroxyprolines. In terms of tissue distribution, expressed in roots, stems, leaves and flowers, mostly in vascular tissues.

It localises to the secreted. The protein localises to the cell wall. In terms of biological role, modulates cell morphogenesis by regulating cell wall formation and assembly, and/or growth polarization. The protein is Leucine-rich repeat extensin-like protein 4 (LRX4) of Arabidopsis thaliana (Mouse-ear cress).